Consider the following 312-residue polypeptide: Malate dehydrogenase (312 aa).

NAD(+) contacts are provided by residues 12 to 17 (GAGFTG) and Asp-36. Positions 87 and 93 each coordinate substrate. NAD(+) is bound by residues Asn-100 and 123–125 (LTN). Asn-125 is a substrate binding site. Ser-149 is modified (phosphoserine). Arg-156 is a substrate binding site. His-180 serves as the catalytic Proton acceptor.

It belongs to the LDH/MDH superfamily. MDH type 3 family.

The enzyme catalyses (S)-malate + NAD(+) = oxaloacetate + NADH + H(+). Catalyzes the reversible oxidation of malate to oxaloacetate. This is Malate dehydrogenase from Geobacillus sp. (strain WCH70).